A 389-amino-acid chain; its full sequence is Acetylornithine deacetylase (389 aa).

His-85 serves as a coordination point for Zn(2+). Residue Asp-87 is part of the active site. Asp-117 is a Zn(2+) binding site. The active site involves Glu-149. Residues Glu-150, Glu-174, and His-360 each coordinate Zn(2+).

This sequence belongs to the peptidase M20A family. ArgE subfamily. Homodimer. It depends on Zn(2+) as a cofactor. The cofactor is Co(2+). Glutathione serves as cofactor.

The protein localises to the cytoplasm. The catalysed reaction is N(2)-acetyl-L-ornithine + H2O = L-ornithine + acetate. It functions in the pathway amino-acid biosynthesis; L-arginine biosynthesis; L-ornithine from N(2)-acetyl-L-ornithine (linear): step 1/1. Its function is as follows. Catalyzes the hydrolysis of the amide bond of N(2)-acetylated L-amino acids. Cleaves the acetyl group from N-acetyl-L-ornithine to form L-ornithine, an intermediate in L-arginine biosynthesis pathway, and a branchpoint in the synthesis of polyamines. This is Acetylornithine deacetylase from Yersinia pseudotuberculosis serotype O:1b (strain IP 31758).